Reading from the N-terminus, the 538-residue chain is Mevalonate kinase erg12 (538 aa).

Residues 1-87 (MGNPRGRRTN…RNMSRKPSSP (87 aa)) form a disordered region. Polar residues predominate over residues 9 to 29 (TNGSIKTSKGTQRGTVSNLLS). Residues 57–69 (TTPSTTESTLKTT) are compositionally biased toward low complexity. Residues Lys-99, Ser-231, and 236-242 (GAGLGSS) contribute to the ATP site. Mg(2+) is bound by residues Ser-242 and Glu-287. Asp-298 serves as the catalytic Proton acceptor.

It belongs to the GHMP kinase family. Mevalonate kinase subfamily. In terms of assembly, homodimer. Mg(2+) serves as cofactor.

Its subcellular location is the cytoplasm. It localises to the cytosol. It catalyses the reaction (R)-mevalonate + ATP = (R)-5-phosphomevalonate + ADP + H(+). It functions in the pathway isoprenoid biosynthesis; isopentenyl diphosphate biosynthesis via mevalonate pathway; isopentenyl diphosphate from (R)-mevalonate: step 1/3. Its function is as follows. Mevalonate kinase; part of the second module of ergosterol biosynthesis pathway that includes the middle steps of the pathway. Erg12 converts mevalonate into 5-phosphomevalonate. The second module is carried out in the vacuole and involves the formation of farnesyl diphosphate, which is also an important intermediate in the biosynthesis of ubiquinone, dolichol, heme and prenylated proteins. Activity by the mevalonate kinase erg12 (AFUA_4G07780) first converts mevalonate into 5-phosphomevalonate. 5-phosphomevalonate is then further converted to 5-diphosphomevalonate by the phosphomevalonate kinase erg8 (AFUA_5G10680). The diphosphomevalonate decarboxylase mvd1 (AFUA_4G07130) then produces isopentenyl diphosphate. The isopentenyl-diphosphate delta-isomerase idi1 (AFUA_6G11160) then catalyzes the 1,3-allylic rearrangement of the homoallylic substrate isopentenyl (IPP) to its highly electrophilic allylic isomer, dimethylallyl diphosphate (DMAPP). Finally the farnesyl diphosphate synthase erg20 (AFUA_5G02450) catalyzes the sequential condensation of isopentenyl pyrophosphate with dimethylallyl pyrophosphate, and then with the resultant geranylpyrophosphate to the ultimate product farnesyl pyrophosphate. The polypeptide is Mevalonate kinase erg12 (Aspergillus fumigatus (strain ATCC MYA-4609 / CBS 101355 / FGSC A1100 / Af293) (Neosartorya fumigata)).